The primary structure comprises 611 residues: Protein PES4 (611 aa).

The disordered stretch occupies residues Phe-37–Lys-81. Positions Arg-45 to Ser-54 are enriched in basic and acidic residues. 4 RRM domains span residues Val-91–Arg-169, Thr-179–Ile-247, Asn-303–Asp-379, and Ser-393–Gln-471.

It localises to the nucleus. This is Protein PES4 (PES4) from Saccharomyces cerevisiae (strain ATCC 204508 / S288c) (Baker's yeast).